We begin with the raw amino-acid sequence, 167 residues long: Endoribonuclease YbeY (167 aa).

H125, H129, and H135 together coordinate Zn(2+).

Belongs to the endoribonuclease YbeY family. The cofactor is Zn(2+).

It is found in the cytoplasm. In terms of biological role, single strand-specific metallo-endoribonuclease involved in late-stage 70S ribosome quality control and in maturation of the 3' terminus of the 16S rRNA. The protein is Endoribonuclease YbeY of Allorhizobium ampelinum (strain ATCC BAA-846 / DSM 112012 / S4) (Agrobacterium vitis (strain S4)).